The primary structure comprises 589 residues: 2-succinyl-5-enolpyruvyl-6-hydroxy-3-cyclohexene-1-carboxylate synthase (589 aa).

Positions 198 to 222 are disordered; sequence DAATTEGAHDSHAPSQPTRGPRKLP.

Belongs to the TPP enzyme family. MenD subfamily. In terms of assembly, homodimer. The cofactor is Mg(2+). It depends on Mn(2+) as a cofactor. Thiamine diphosphate is required as a cofactor.

The enzyme catalyses isochorismate + 2-oxoglutarate + H(+) = 5-enolpyruvoyl-6-hydroxy-2-succinyl-cyclohex-3-ene-1-carboxylate + CO2. It functions in the pathway quinol/quinone metabolism; 1,4-dihydroxy-2-naphthoate biosynthesis; 1,4-dihydroxy-2-naphthoate from chorismate: step 2/7. The protein operates within quinol/quinone metabolism; menaquinone biosynthesis. In terms of biological role, catalyzes the thiamine diphosphate-dependent decarboxylation of 2-oxoglutarate and the subsequent addition of the resulting succinic semialdehyde-thiamine pyrophosphate anion to isochorismate to yield 2-succinyl-5-enolpyruvyl-6-hydroxy-3-cyclohexene-1-carboxylate (SEPHCHC). The chain is 2-succinyl-5-enolpyruvyl-6-hydroxy-3-cyclohexene-1-carboxylate synthase from Corynebacterium jeikeium (strain K411).